The sequence spans 874 residues: Alanine--tRNA ligase (874 aa).

The Zn(2+) site is built by His564, His568, Cys665, and His669.

Belongs to the class-II aminoacyl-tRNA synthetase family. The cofactor is Zn(2+).

The protein localises to the cytoplasm. The catalysed reaction is tRNA(Ala) + L-alanine + ATP = L-alanyl-tRNA(Ala) + AMP + diphosphate. Functionally, catalyzes the attachment of alanine to tRNA(Ala) in a two-step reaction: alanine is first activated by ATP to form Ala-AMP and then transferred to the acceptor end of tRNA(Ala). Also edits incorrectly charged Ser-tRNA(Ala) and Gly-tRNA(Ala) via its editing domain. In Burkholderia orbicola (strain MC0-3), this protein is Alanine--tRNA ligase.